The primary structure comprises 706 residues: Zinc finger CCCH domain-containing protein 56 (706 aa).

ANK repeat units follow at residues 83–113 (EQRTPLMVASLYGSLDVVKFILSFPEAELNL) and 118–150 (DKSTALHCAASGASVNSLDVVKLLLSVGADPNI). Over residues 211–221 (SSLLSLDSVSS) the composition is skewed to low complexity. The segment at 211–235 (SSLLSLDSVSSPTKPHGTDVTFASE) is disordered. 2 consecutive C3H1-type zinc fingers follow at residues 302 to 324 (PCPDFKKGSCKQGDMCEYAHGVF) and 332 to 356 (QYRTRLCKDGMGCNRRVCFFAHANE). Disordered stretches follow at residues 396–427 (PSAAQHSFTPPISPSGNGSMPHSSMGWPQQNI), 545–616 (SPKN…QTHG), and 652–692 (QMLK…TRES). Polar residues-rich tracts occupy residues 397–427 (SAAQHSFTPPISPSGNGSMPHSSMGWPQQNI) and 545–560 (SPKNVEQHSLLQQASS). At Ser-568 the chain carries Phosphoserine. Over residues 580-592 (SRSLSSRDFGSSL) the composition is skewed to low complexity. Polar residues-rich tracts occupy residues 600 to 616 (DSGSPLSPWSSWDQTHG), 652 to 667 (QMLKDSSSPRNGNRVV), and 677 to 686 (QGGSSVNPHN).

This chain is Zinc finger CCCH domain-containing protein 56, found in Arabidopsis thaliana (Mouse-ear cress).